A 305-amino-acid chain; its full sequence is Cytochrome c biogenesis protein CcsA (305 aa).

8 consecutive transmembrane segments (helical) span residues 11–31, 37–57, 63–83, 96–116, 141–161, 212–232, 246–263, and 275–295; these read GLGF…FWAV, TGIV…QLVL, GHFP…ACTL, IVAA…SFAL, VIMV…AVLL, TITV…VWAN, TWAL…HTRL, and VAVV…LLGI.

The protein belongs to the CcmF/CycK/Ccl1/NrfE/CcsA family. In terms of assembly, may interact with ccs1.

It localises to the cellular thylakoid membrane. Functionally, required during biogenesis of c-type cytochromes (cytochrome c6 and cytochrome f) at the step of heme attachment. This is Cytochrome c biogenesis protein CcsA from Parasynechococcus marenigrum (strain WH8102).